The following is a 276-amino-acid chain: Large ribosomal subunit protein uL2 (276 aa).

Residues 224 to 276 (AMNPIDHPHGGGEGKTSGGRNPVTPWGVPTKGKKTRKRNKSSNKYIKRVSDKG) are disordered. Residues 254-270 (KGKKTRKRNKSSNKYIK) are compositionally biased toward basic residues.

The protein belongs to the universal ribosomal protein uL2 family. In terms of assembly, part of the 50S ribosomal subunit. Forms a bridge to the 30S subunit in the 70S ribosome.

Its function is as follows. One of the primary rRNA binding proteins. Required for association of the 30S and 50S subunits to form the 70S ribosome, for tRNA binding and peptide bond formation. It has been suggested to have peptidyltransferase activity; this is somewhat controversial. Makes several contacts with the 16S rRNA in the 70S ribosome. This chain is Large ribosomal subunit protein uL2, found in Ehrlichia canis (strain Jake).